Consider the following 81-residue polypeptide: Exodeoxyribonuclease 7 small subunit (81 aa).

It belongs to the XseB family. As to quaternary structure, heterooligomer composed of large and small subunits.

Its subcellular location is the cytoplasm. The enzyme catalyses Exonucleolytic cleavage in either 5'- to 3'- or 3'- to 5'-direction to yield nucleoside 5'-phosphates.. Functionally, bidirectionally degrades single-stranded DNA into large acid-insoluble oligonucleotides, which are then degraded further into small acid-soluble oligonucleotides. In Nitratidesulfovibrio vulgaris (strain ATCC 29579 / DSM 644 / CCUG 34227 / NCIMB 8303 / VKM B-1760 / Hildenborough) (Desulfovibrio vulgaris), this protein is Exodeoxyribonuclease 7 small subunit.